Here is a 153-residue protein sequence, read N- to C-terminus: MSEKYVVTWDMLQIHARQLAQRLLPVEQWTGIIAVSRGGLVPAALLARELGIRHVDTVCISSYDHDHQRDLKILKKAEGDGEGFIVVDDLVDTGGTAKVIREMYPKAHFVTIFAKPEGRPLVDDFVVDIPQNTWIEQPWDMGVMFVPPVCDKK.

Residues 37-38, arginine 69, and 88-96 each bind 5-phospho-alpha-D-ribose 1-diphosphate; these read RG and DDLVDTGGT. Arginine 69 contributes to the GMP binding site. Aspartate 89 contacts Mg(2+). Guanine-binding residues include aspartate 92 and isoleucine 135. Aspartate 92 and isoleucine 135 together coordinate xanthine. Residues 92-96 and 134-135 each bind GMP; these read DTGGT and WI.

It belongs to the purine/pyrimidine phosphoribosyltransferase family. XGPT subfamily. As to quaternary structure, homotetramer. It depends on Mg(2+) as a cofactor.

It localises to the cell inner membrane. The enzyme catalyses GMP + diphosphate = guanine + 5-phospho-alpha-D-ribose 1-diphosphate. The catalysed reaction is XMP + diphosphate = xanthine + 5-phospho-alpha-D-ribose 1-diphosphate. It catalyses the reaction IMP + diphosphate = hypoxanthine + 5-phospho-alpha-D-ribose 1-diphosphate. It participates in purine metabolism; GMP biosynthesis via salvage pathway; GMP from guanine: step 1/1. Its pathway is purine metabolism; XMP biosynthesis via salvage pathway; XMP from xanthine: step 1/1. Purine salvage pathway enzyme that catalyzes the transfer of the ribosyl-5-phosphate group from 5-phospho-alpha-D-ribose 1-diphosphate (PRPP) to the N9 position of the 6-oxopurines guanine and xanthine to form the corresponding ribonucleotides GMP (guanosine 5'-monophosphate) and XMP (xanthosine 5'-monophosphate), with the release of PPi. To a lesser extent, also acts on hypoxanthine. The chain is Xanthine-guanine phosphoribosyltransferase from Proteus mirabilis (strain HI4320).